Reading from the N-terminus, the 260-residue chain is NAD-dependent protein deacetylase (260 aa).

The Deacetylase sirtuin-type domain occupies D9–L260. NAD(+)-binding residues include A35, T39, F46, R47, Q114, I116, D117, and H132. F46 is a nicotinamide binding site. Residues I116 and D117 each coordinate nicotinamide. H132 serves as the catalytic Proton acceptor. Residues C140, C143, C166, and C168 each coordinate Zn(2+). The NAD(+) site is built by S206, S207, N231, D248, and V249.

Belongs to the sirtuin family. Class U subfamily. Requires Zn(2+) as cofactor.

The protein localises to the cytoplasm. The catalysed reaction is N(6)-acetyl-L-lysyl-[protein] + NAD(+) + H2O = 2''-O-acetyl-ADP-D-ribose + nicotinamide + L-lysyl-[protein]. NAD-dependent protein deacetylase which modulates the activities of several enzymes which are inactive in their acetylated form. Deacetylates the N-terminal lysine residue of Alba, the major archaeal chromatin protein and that, in turn, increases Alba's DNA binding affinity, thereby repressing transcription. The polypeptide is NAD-dependent protein deacetylase (Haloarcula marismortui (strain ATCC 43049 / DSM 3752 / JCM 8966 / VKM B-1809) (Halobacterium marismortui)).